Reading from the N-terminus, the 66-residue chain is Truncated interferon antagonist OPG039 (66 aa).

One copy of the ANK repeat lies at 29–58; it reads HGHSALYYAIADNNMRLVCTLLNAGALKNL.

It belongs to the orthopoxvirus OPG039 family.

In Homo sapiens (Human), this protein is Truncated interferon antagonist OPG039 (OPG040).